Consider the following 214-residue polypeptide: MTNGQKIEVAVQLPESKVAATENNETMSGPLVVGGGVAKPFGRKADVMHVILRLLCTITSVTAVSFMVTAHQSSTVSIYGFMLPVRSKWSFSHSFEYLVGVSAAVAAHSLLQLLISMSRLLRKSPVIPSRSHAWLIFAGDQVFAYAMISAGAAASGVTNLNRTGIQHTALPNFCKPLNYFCNHVAVSIAFAFISCLLLAALAVQEVIWLSKSKY.

At 1 to 49 (MTNGQKIEVAVQLPESKVAATENNETMSGPLVVGGGVAKPFGRKADVMH) the chain is on the cytoplasmic side. Residues 50-70 (VILRLLCTITSVTAVSFMVTA) form a helical membrane-spanning segment. The Extracellular portion of the chain corresponds to 71 to 96 (HQSSTVSIYGFMLPVRSKWSFSHSFE). The helical transmembrane segment at 97–117 (YLVGVSAAVAAHSLLQLLISM) threads the bilayer. The Cytoplasmic portion of the chain corresponds to 118-132 (SRLLRKSPVIPSRSH). Residues 133 to 153 (AWLIFAGDQVFAYAMISAGAA) form a helical membrane-spanning segment. At 154–182 (ASGVTNLNRTGIQHTALPNFCKPLNYFCN) the chain is on the extracellular side. N-linked (GlcNAc...) asparagine glycosylation is present at asparagine 161. A helical membrane pass occupies residues 183-203 (HVAVSIAFAFISCLLLAALAV). Residues 204–214 (QEVIWLSKSKY) are Cytoplasmic-facing.

The protein belongs to the Casparian strip membrane proteins (CASP) family. In terms of assembly, homodimer and heterodimers.

Its subcellular location is the cell membrane. The sequence is that of CASP-like protein 3A1 from Ricinus communis (Castor bean).